Consider the following 584-residue polypeptide: uncharacterized protein (584 aa).

4 disordered regions span residues 151–188 (EHPP…DNDL), 222–243 (KRKE…SRAN), 399–418 (SETP…PPDF), and 433–584 (MQPS…AKSD). Positions 159 to 188 (TSSEKTRSENRERKKRWREQNEERNKDNDL) are enriched in basic and acidic residues. A compositionally biased stretch (low complexity) spans 231–243 (LSQNQSSNASRAN). Composition is skewed to polar residues over residues 399–409 (SETPTPVSGNG), 433–453 (MQPS…SSEM), 483–500 (NAVT…SGSP), 511–531 (NYSQ…SSLP), and 572–584 (QRSS…AKSD).

This is an uncharacterized protein from Schizosaccharomyces pombe (strain 972 / ATCC 24843) (Fission yeast).